Reading from the N-terminus, the 272-residue chain is Undecaprenyl-diphosphatase (272 aa).

Transmembrane regions (helical) follow at residues 1-21, 38-58, 84-104, 112-132, 145-165, 183-203, 219-239, and 250-270; these read MSYL…FLPI, PGAT…VVFF, VRMG…GYLF, FRSL…LGLA, MTYG…VPGV, PVAA…SGLY, QTAV…AGLM, and FVVY…TGAI.

It belongs to the UppP family.

The protein resides in the cell membrane. The catalysed reaction is di-trans,octa-cis-undecaprenyl diphosphate + H2O = di-trans,octa-cis-undecaprenyl phosphate + phosphate + H(+). Functionally, catalyzes the dephosphorylation of undecaprenyl diphosphate (UPP). Confers resistance to bacitracin. This Clavibacter michiganensis subsp. michiganensis (strain NCPPB 382) protein is Undecaprenyl-diphosphatase.